Here is a 408-residue protein sequence, read N- to C-terminus: FAD-dependent monooxygenase nscC (408 aa).

Residues 1–20 (MASRLPILIIGAGISGLTTA) form the signal peptide. 2 residues coordinate FAD: Glu-34 and Ala-45. Residues Asn-91 and Asn-103 are each glycosylated (N-linked (GlcNAc...) asparagine). Arg-119 provides a ligand contact to FAD. Asn-170 and Asn-231 each carry an N-linked (GlcNAc...) asparagine glycan. 2 residues coordinate FAD: Asp-328 and Gly-341.

The protein belongs to the paxM FAD-dependent monooxygenase family. FAD is required as a cofactor.

It functions in the pathway secondary metabolite biosynthesis. Functionally, FAD-dependent monooxygenase; part of the gene cluster that mediates the biosynthesis of neosartoricin, a prenylated anthracenone that exhibits T-cell antiproliferative activity, suggestive of a physiological role as an immunosuppressive agent. The non-reducing polyketide synthase nscA probably synthesizes and cyclizes the decaketide backbone. The hydrolase nscB then mediates the product release through hydrolysis followed by spontaneous decarboxylation. The prenyltransferase nscD catalyzes the addition of the dimethylallyl group to the aromatic C5. The FAD-dependent monooxygenase nscC is then responsible for the stereospecific hydroxylation at C2. There is no gene encoding O-acetyltransferase in the nsc gene cluster; thus, the last step of 2-O-acetylation leading to neosartoricin may be catalyzed by an unidentified O-acetyltransferase. The polypeptide is FAD-dependent monooxygenase nscC (Aspergillus fumigatus (strain ATCC MYA-4609 / CBS 101355 / FGSC A1100 / Af293) (Neosartorya fumigata)).